A 90-amino-acid chain; its full sequence is MARTVNCIKLGKEAEGLDFPPYPGELGKRIWESVSKQAWADWLKHQTMLVNENRLNLADARARQYLARQMENHFFGGGADAAQGYVPPSA.

Belongs to the Fe(2+)-trafficking protein family.

Its function is as follows. Could be a mediator in iron transactions between iron acquisition and iron-requiring processes, such as synthesis and/or repair of Fe-S clusters in biosynthetic enzymes. The protein is Probable Fe(2+)-trafficking protein of Albidiferax ferrireducens (strain ATCC BAA-621 / DSM 15236 / T118) (Rhodoferax ferrireducens).